The sequence spans 118 residues: Holo-[acyl-carrier-protein] synthase (118 aa).

Residues Asp8 and Glu58 each coordinate Mg(2+).

Belongs to the P-Pant transferase superfamily. AcpS family. Mg(2+) is required as a cofactor.

It localises to the cytoplasm. It carries out the reaction apo-[ACP] + CoA = holo-[ACP] + adenosine 3',5'-bisphosphate + H(+). Transfers the 4'-phosphopantetheine moiety from coenzyme A to a Ser of acyl-carrier-protein. In Listeria innocua serovar 6a (strain ATCC BAA-680 / CLIP 11262), this protein is Holo-[acyl-carrier-protein] synthase.